A 104-amino-acid chain; its full sequence is NADH-quinone oxidoreductase subunit K (104 aa).

A run of 3 helical transmembrane segments spans residues 4–24 (VPAS…LFGA), 31–51 (VIVL…LVAF), and 67–87 (LFTM…LIAL).

It belongs to the complex I subunit 4L family. In terms of assembly, NDH-1 is composed of 14 different subunits. Subunits NuoA, H, J, K, L, M, N constitute the membrane sector of the complex.

The protein localises to the cell membrane. It carries out the reaction a quinone + NADH + 5 H(+)(in) = a quinol + NAD(+) + 4 H(+)(out). Functionally, NDH-1 shuttles electrons from NADH, via FMN and iron-sulfur (Fe-S) centers, to quinones in the respiratory chain. The immediate electron acceptor for the enzyme in this species is believed to be a menaquinone. Couples the redox reaction to proton translocation (for every two electrons transferred, four hydrogen ions are translocated across the cytoplasmic membrane), and thus conserves the redox energy in a proton gradient. The polypeptide is NADH-quinone oxidoreductase subunit K (Bacillus mycoides (strain KBAB4) (Bacillus weihenstephanensis)).